Reading from the N-terminus, the 89-residue chain is Small ribosomal subunit protein uS15 (89 aa).

It belongs to the universal ribosomal protein uS15 family. In terms of assembly, part of the 30S ribosomal subunit. Forms a bridge to the 50S subunit in the 70S ribosome, contacting the 23S rRNA.

In terms of biological role, one of the primary rRNA binding proteins, it binds directly to 16S rRNA where it helps nucleate assembly of the platform of the 30S subunit by binding and bridging several RNA helices of the 16S rRNA. Forms an intersubunit bridge (bridge B4) with the 23S rRNA of the 50S subunit in the ribosome. In Jannaschia sp. (strain CCS1), this protein is Small ribosomal subunit protein uS15.